The sequence spans 326 residues: Serine hydrolase-like protein (326 aa).

An AB hydrolase-1 domain is found at 44–155; that stretch reads PVLCLHGWAD…FLPTEVTDMF (112 aa). The active site involves serine 118.

The protein belongs to the AB hydrolase superfamily.

Its function is as follows. Probable serine hydrolase. This is Serine hydrolase-like protein (serhl) from Danio rerio (Zebrafish).